The primary structure comprises 190 residues: UPF0301 protein PSPTO_5037 (190 aa).

The protein belongs to the UPF0301 (AlgH) family.

The polypeptide is UPF0301 protein PSPTO_5037 (Pseudomonas syringae pv. tomato (strain ATCC BAA-871 / DC3000)).